The primary structure comprises 433 residues: N-lysine methyltransferase SMYD2 (433 aa).

One can recognise an SET domain in the interval 7–241 (GGLERFCSAG…PGDEVFTSYI (235 aa)). 17-19 (KGR) contributes to the S-adenosyl-L-methionine binding site. The Zn(2+) site is built by Cys-52, Cys-55, Cys-65, Cys-68, Cys-74, Cys-78, His-86, and Cys-90. The segment at 52-90 (CECCFARKEGLSKCGRCKQAFYCDVECQKEDWPLHKLEC) adopts an MYND-type zinc-finger fold. S-adenosyl-L-methionine is bound by residues His-137, 206–207 (NH), and 258–260 (YFF). Ser-283 carries the post-translational modification Phosphoserine.

This sequence belongs to the class V-like SAM-binding methyltransferase superfamily. In terms of assembly, interacts (via MYND-type zinc finger) with EPB41L3. Interacts (via SET domain) with p53/TP53. Interacts with RB1 and HSP90AA1. Interacts with RNA polymerase II and HELZ. Interacts with SIN3A and HDAC1. As to expression, highly expressed in heart, skeletal muscle and brain tissue. During cardiac development, it is differentially expressed with highest expression in the neonatal heart while very low expression is detected at 12.5 dpc and adult. Specifically expressed in cardiomyocytes (at protein level).

It is found in the cytoplasm. It localises to the cytosol. Its subcellular location is the nucleus. It catalyses the reaction L-lysyl(4)-[histone H3] + 3 S-adenosyl-L-methionine = N(6),N(6),N(6)-trimethyl-L-lysyl(4)-[histone H3] + 3 S-adenosyl-L-homocysteine + 3 H(+). It carries out the reaction L-lysyl-[protein] + S-adenosyl-L-methionine = N(6)-methyl-L-lysyl-[protein] + S-adenosyl-L-homocysteine + H(+). In terms of biological role, protein-lysine N-methyltransferase that methylates both histones and non-histone proteins, including p53/TP53 and RB1. Specifically trimethylates histone H3 'Lys-4' (H3K4me3) in vivo. The activity requires interaction with HSP90alpha. Shows even higher methyltransferase activity on p53/TP53. Monomethylates 'Lys-370' of p53/TP53, leading to decreased DNA-binding activity and subsequent transcriptional regulation activity of p53/TP53. Monomethylates RB1 at 'Lys-860'. The polypeptide is N-lysine methyltransferase SMYD2 (Smyd2) (Mus musculus (Mouse)).